A 120-amino-acid chain; its full sequence is Large ribosomal subunit protein uL18 (120 aa).

The protein belongs to the universal ribosomal protein uL18 family. As to quaternary structure, part of the 50S ribosomal subunit; part of the 5S rRNA/L5/L18/L25 subcomplex. Contacts the 5S and 23S rRNAs.

Its function is as follows. This is one of the proteins that bind and probably mediate the attachment of the 5S RNA into the large ribosomal subunit, where it forms part of the central protuberance. The protein is Large ribosomal subunit protein uL18 of Rhodopseudomonas palustris (strain BisA53).